Consider the following 390-residue polypeptide: MSAAIVNAVKQCGYFNQGQCLSCRHIQQPLAQQVAVKTQTLQQLLAPFIPANSAELFLPPITGDDSGFRNKAKMVVLGAAHEPVLGIVGPSGEAVDLCDCLLYPADMQALLHRLTRFVQQAGLPPYRVDKAKGELKFILLTRSQVRGEYLLRFVLRSHNGIERIERELPALLAEYPQIKVVSVNIQPIHMAILEGDEEIFLTENTRLEERFNHVPLFIRPKSFFQTNPQVAAQLYQTAREWVAEFSPRSLWDLFCGVGGFGLHCASNDITLTGIEIEAEAIACAQMSAQMMGLENVQFMALDSTDFAKGKSAADKPDLIIVNPPRRGIGEALCQSLSEFAPKAILYSSCNPKTLAKDLEHIQGYHLTKVQLFDLFPHSDHFEVLAMLVKD.

Residues Cys12, Cys20, Cys23, and Cys100 each coordinate [4Fe-4S] cluster. 4 residues coordinate S-adenosyl-L-methionine: Gln225, Phe254, Glu275, and Asn322. The active-site Nucleophile is the Cys349.

This sequence belongs to the class I-like SAM-binding methyltransferase superfamily. RNA M5U methyltransferase family. RlmC subfamily.

It catalyses the reaction uridine(747) in 23S rRNA + S-adenosyl-L-methionine = 5-methyluridine(747) in 23S rRNA + S-adenosyl-L-homocysteine + H(+). Catalyzes the formation of 5-methyl-uridine at position 747 (m5U747) in 23S rRNA. This chain is 23S rRNA (uracil(747)-C(5))-methyltransferase RlmC, found in Shewanella baltica (strain OS155 / ATCC BAA-1091).